The following is a 435-amino-acid chain: ATP-dependent protease ATPase subunit HslU (435 aa).

ATP is bound by residues valine 18, 60–65 (GCGKTE), aspartate 248, glutamate 313, and arginine 385.

The protein belongs to the ClpX chaperone family. HslU subfamily. In terms of assembly, a double ring-shaped homohexamer of HslV is capped on each side by a ring-shaped HslU homohexamer. The assembly of the HslU/HslV complex is dependent on binding of ATP.

The protein resides in the cytoplasm. Functionally, ATPase subunit of a proteasome-like degradation complex; this subunit has chaperone activity. The binding of ATP and its subsequent hydrolysis by HslU are essential for unfolding of protein substrates subsequently hydrolyzed by HslV. HslU recognizes the N-terminal part of its protein substrates and unfolds these before they are guided to HslV for hydrolysis. The protein is ATP-dependent protease ATPase subunit HslU of Beijerinckia indica subsp. indica (strain ATCC 9039 / DSM 1715 / NCIMB 8712).